The sequence spans 125 residues: MIYRLKKNIEFIIVYRRGKSFANKTLVLYVLKNKRNKDKDGIAYSKVGISVSKKVGNSVVRSKCKRLLSESFRLNYNNILKGYDCVFVARNPMRDSDYFETEKAMKNLIKKAGLYYDEENGIKSN.

The protein belongs to the RnpA family. In terms of assembly, consists of a catalytic RNA component (M1 or rnpB) and a protein subunit.

It carries out the reaction Endonucleolytic cleavage of RNA, removing 5'-extranucleotides from tRNA precursor.. RNaseP catalyzes the removal of the 5'-leader sequence from pre-tRNA to produce the mature 5'-terminus. It can also cleave other RNA substrates such as 4.5S RNA. The protein component plays an auxiliary but essential role in vivo by binding to the 5'-leader sequence and broadening the substrate specificity of the ribozyme. The polypeptide is Ribonuclease P protein component (Clostridium botulinum (strain Alaska E43 / Type E3)).